The chain runs to 538 residues: Putative ABC1 protein At2g40090 (538 aa).

An N-terminal signal peptide occupies residues 1–26 (MAARSLWRTRTKLLVVGTALCGGSGA).

It belongs to the protein kinase superfamily. ADCK protein kinase family.

This is Putative ABC1 protein At2g40090 from Arabidopsis thaliana (Mouse-ear cress).